The chain runs to 435 residues: Probable exopolygalacturonase X (435 aa).

The signal sequence occupies residues 1–22 (MRLTHVLSHTLGLLALGATAEA). The interval 31-55 (CSPKKPFRPLPTSSSRDKTCHVRSH) is disordered. Over residues 45-55 (SRDKTCHVRSH) the composition is skewed to basic and acidic residues. 4 N-linked (GlcNAc...) asparagine glycosylation sites follow: N93, N112, N128, and N198. 2 PbH1 repeats span residues 199–229 (SSNV…DTYR) and 230–251 (SNNI…SFKP). D244 serves as the catalytic Proton donor. A disulfide bridge connects residues C246 and C263. Residues N252 and N264 are each glycosylated (N-linked (GlcNAc...) asparagine). A PbH1 3 repeat occupies 253 to 273 (STNILVQNLHCNGSHGISVGS). The active site involves H267. 4 N-linked (GlcNAc...) asparagine glycosylation sites follow: N291, N296, N328, and N353. One copy of the PbH1 4 repeat lies at 326-347 (VKNITYDTALIDNVDWAIEITQ). A PbH1 5 repeat occupies 361–409 (PSSLTISDVHIKNFRGTTSGSEDPYVGTIVCSSPDTCSDIYTSNINVTS). A disulfide bridge connects residues C391 and C397. N406 and N429 each carry an N-linked (GlcNAc...) asparagine glycan.

It belongs to the glycosyl hydrolase 28 family.

It localises to the secreted. It carries out the reaction [(1-&gt;4)-alpha-D-galacturonosyl](n) + H2O = alpha-D-galacturonate + [(1-&gt;4)-alpha-D-galacturonosyl](n-1). Its function is as follows. Specific in hydrolyzing the terminal glycosidic bond of polygalacturonic acid and oligogalacturonates. This is Probable exopolygalacturonase X (pgaX) from Aspergillus niger (strain ATCC MYA-4892 / CBS 513.88 / FGSC A1513).